Here is a 619-residue protein sequence, read N- to C-terminus: Probable ATP-dependent RNA helicase DDX59 (619 aa).

A disordered region spans residues 1–101; it reads MFVPRSLKIK…KSFSKTQRWP (101 aa). A compositionally biased stretch (basic and acidic residues) spans 12-27; it reads SSNDDLKSGEAKKSKP. Residue K26 forms a Glycyl lysine isopeptide (Lys-Gly) (interchain with G-Cter in SUMO2) linkage. A compositionally biased stretch (polar residues) spans 59–76; the sequence is ASSTNSPSCQLAEVSSTG. At S64 the chain carries Phosphoserine. Positions 79 to 91 are enriched in basic and acidic residues; the sequence is EGVKDSHPSEEPV. The segment at 104-133 adopts an HIT-type zinc-finger fold; sequence GEPVCVVCGRYGEYICDKTDEDVCSLECKA. Residue S160 is modified to Phosphoserine. The Q motif signature appears at 203–231; sequence IDFEHCGFPETLNQNLKKSGYEVPTPIQM. The 172-residue stretch at 234–405 folds into the Helicase ATP-binding domain; that stretch reads IPVGLLGRDI…DQLLHNPVRI (172 aa). Residue 247-254 participates in ATP binding; it reads ADTGSGKT. Residues 353–356 carry the DEAD box motif; the sequence is DEAD. The Helicase C-terminal domain maps to 416-579; sequence SVRQIILWVE…ILPPQLLNSP (164 aa). Residues 583-594 are compositionally biased toward basic and acidic residues; sequence EQKRKEQQKDRQ. Residues 583 to 603 form a disordered region; the sequence is EQKRKEQQKDRQTQNSLVTGA.

The protein belongs to the DEAD box helicase family. DDX59 subfamily. In terms of assembly, interacts (via HIT-type zinc finger) with the RUVBL1/RUVBL2 complex in the presence of ADP.

It localises to the cytoplasm. The protein localises to the nucleus. The catalysed reaction is ATP + H2O = ADP + phosphate + H(+). The sequence is that of Probable ATP-dependent RNA helicase DDX59 (Ddx59) from Mus musculus (Mouse).